A 770-amino-acid chain; its full sequence is Mitochondrial 15S rRNA processing factor CCM1 (770 aa).

A mitochondrion-targeting transit peptide spans 1 to 90 (MIRLILWNNV…RSFTKVIAQH (90 aa)). Disordered regions lie at residues 28 to 67 (NKRKRRIPPSKPRSSNRKDGDIEPYRMTDQNQTPNTGSIA) and 90 to 114 (HLKPEQENDSLTSAEKPDTSQLPPI). A compositionally biased stretch (basic and acidic residues) spans 43–53 (NRKDGDIEPYR). Residues 55-65 (TDQNQTPNTGS) show a composition bias toward polar residues. 5 PPR repeats span residues 276 to 310 (KIDHYETMILAYVKNNHMEKIDGILAQMKKKNIEI), 311 to 346 (SKMIYTSIVRGYIFYQKDHQRALDTFDSMKFLSQKT), 349 to 383 (DEKVYTDVIVSCVMHREIERALDLYYELKDKGMNV), 384 to 419 (NQNLLSTLAKGCSRSKQFKTQAWNFLFQVYDHGWVP), and 420 to 454 (NLQTYEHMLYIAARDGDVELTRVLFYKMLQTNSVT). The segment covering 588–598 (RQDEPTEKATT) has biased composition (basic and acidic residues). The interval 588 to 610 (RQDEPTEKATTTEEQITSSEPDT) is disordered. The span at 599-610 (TEEQITSSEPDT) shows a compositional bias: polar residues. The stretch at 636 to 666 (DSYLYNLAIKAAGKFKDYSFAQQILHERGQF) is one PPR 6 repeat.

Belongs to the CCM1 family. Binds to mitochondrial small subunit 15S rRNA.

The protein localises to the mitochondrion. Its function is as follows. Regulates mitochondrial small subunit maturation by controlling 15S rRNA 5'-end processing. Localizes to the 5' precursor of the 15S rRNA in a position that is subsequently occupied by mS47 in the mature yeast mtSSU. Uses structure and sequence-specific RNA recognition, binding to a single-stranded region of the precursor and specifically recognizing bases -6 to -1. The exchange of Ccm1 for mS47 is coupled to the irreversible removal of precursor rRNA that is accompanied by conformational changes of the mitoribosomal proteins uS5m and mS26. These conformational changes signal completion of 5'-end rRNA processing through protection of the mature 5'-end of the 15S rRNA and stabilization of mS47. The removal of the 5' precursor together with the dissociation of Ccm1 may be catalyzed by the 5'-3' exoribonuclease Pet127. Involved in the specific removal of group I introns in mitochondrial encoded transcripts. This chain is Mitochondrial 15S rRNA processing factor CCM1 (CCM1), found in Candida albicans (strain WO-1) (Yeast).